A 250-amino-acid polypeptide reads, in one-letter code: Ribonuclease HII (250 aa).

The RNase H type-2 domain occupies 66–250 (QLVAGVDEVG…SFAPVSEYEK (185 aa)). The a divalent metal cation site is built by Asp72, Glu73, and Asp164.

The protein belongs to the RNase HII family. Mn(2+) is required as a cofactor. The cofactor is Mg(2+).

Its subcellular location is the cytoplasm. The catalysed reaction is Endonucleolytic cleavage to 5'-phosphomonoester.. Its function is as follows. Endonuclease that specifically degrades the RNA of RNA-DNA hybrids. This chain is Ribonuclease HII, found in Lactobacillus gasseri (strain ATCC 33323 / DSM 20243 / BCRC 14619 / CIP 102991 / JCM 1131 / KCTC 3163 / NCIMB 11718 / NCTC 13722 / AM63).